Here is a 398-residue protein sequence, read N- to C-terminus: MAKLTVKDVDLKGKKVLVRVDFNVPLKDGVITNDNRITAALPTIKYIIEQGGRAILFSHLGRVKEEADKEGKSLAPVAADLAAKLGQDVVFPGVTRGAELEAAINALEDGQVLLVENTRFEDVDGKKESKNDPELGKYWASLGDGIFVNDAFGTAHRAHASNVGISGNVEKAVAGFLLENEIAYIQEAVETPERPFVAILGGSKVSDKIGVIENLLEKADKVLIGGGMTYTFYKAQGIEIGNSLVEEDKLDVAKALLEKANGKLVLPVDSKEANAFADYTEVKDTEGEAVDPGFLGLDIGPKSIAKFDEALTGAKTVVWNGPMGVFENPDFQAGTIGVMDAIVKQPGVKSIIGGGDSAAAAINLGRADKFSWISTGGGASMELLEGKVLPGLAALTEK.

Substrate is bound by residues 21-23 (DFN), Arg-36, 59-62 (HLGR), Arg-119, and Arg-157. Residues Lys-208, Gly-296, Glu-327, and 354 to 357 (GGDS) each bind ATP.

It belongs to the phosphoglycerate kinase family. Monomer.

The protein resides in the cytoplasm. It catalyses the reaction (2R)-3-phosphoglycerate + ATP = (2R)-3-phospho-glyceroyl phosphate + ADP. It participates in carbohydrate degradation; glycolysis; pyruvate from D-glyceraldehyde 3-phosphate: step 2/5. The chain is Phosphoglycerate kinase from Streptococcus sanguinis (strain SK36).